Consider the following 34-residue polypeptide: Photosystem II reaction center protein Psb30 (34 aa).

Residues 6 to 26 (VIGQLVSTGLIGLLGPAVIIL) form a helical membrane-spanning segment.

Belongs to the Psb30/Ycf12 family. PSII is composed of 1 copy each of membrane proteins PsbA, PsbB, PsbC, PsbD, PsbE, PsbF, PsbH, PsbI, PsbJ, PsbK, PsbL, PsbM, PsbT, PsbX, PsbY, PsbZ, Psb30/Ycf12, peripheral proteins of the oxygen-evolving complex and a large number of cofactors. It forms dimeric complexes.

Its subcellular location is the plastid. The protein localises to the chloroplast thylakoid membrane. In terms of biological role, a core subunit of photosystem II (PSII), probably helps stabilize the reaction center. In Skeletonema costatum (Marine centric diatom), this protein is Photosystem II reaction center protein Psb30.